Reading from the N-terminus, the 589-residue chain is Lipoprotein LpqB (589 aa).

The N-terminal stretch at 1–20 (MMRGVLVIMRLLCLGMLFTG) is a signal peptide. The N-palmitoyl cysteine moiety is linked to residue Cys21. A lipid anchor (S-diacylglycerol cysteine) is attached at Cys21.

This sequence belongs to the LpqB lipoprotein family.

The protein localises to the cell membrane. The protein is Lipoprotein LpqB of Mycobacterium leprae (strain TN).